A 546-amino-acid chain; its full sequence is Chaperonin GroEL (546 aa).

ATP is bound by residues 30 to 33, K51, 87 to 91, G415, and D495; these read TLGP and DGTTT.

Belongs to the chaperonin (HSP60) family. In terms of assembly, forms a cylinder of 14 subunits composed of two heptameric rings stacked back-to-back. Interacts with the co-chaperonin GroES.

It is found in the cytoplasm. The catalysed reaction is ATP + H2O + a folded polypeptide = ADP + phosphate + an unfolded polypeptide.. Functionally, together with its co-chaperonin GroES, plays an essential role in assisting protein folding. The GroEL-GroES system forms a nano-cage that allows encapsulation of the non-native substrate proteins and provides a physical environment optimized to promote and accelerate protein folding. The chain is Chaperonin GroEL from Brucella anthropi (strain ATCC 49188 / DSM 6882 / CCUG 24695 / JCM 21032 / LMG 3331 / NBRC 15819 / NCTC 12168 / Alc 37) (Ochrobactrum anthropi).